The chain runs to 22 residues: Conantokin-Oc (22 aa).

Residues 1–22 form a disordered region; it reads GEEERKAMAELEAKKAQEALKA. A 4-carboxyglutamate mark is found at E3, E4, E10, and E18.

As to expression, expressed by the venom duct.

The protein localises to the secreted. Functionally, conantokins inhibit N-methyl-D-aspartate (NMDA) receptors. In Conus ochroleucus (Perfect cone), this protein is Conantokin-Oc.